The following is a 151-amino-acid chain: Large ribosomal subunit protein uL22 (151 aa).

Polar residues predominate over residues 1 to 18 (MARINYSINADPENTSKA). Residues 1 to 23 (MARINYSINADPENTSKAMGSEL) are disordered.

The protein belongs to the universal ribosomal protein uL22 family. As to quaternary structure, part of the 50S ribosomal subunit.

This protein binds specifically to 23S rRNA. It makes multiple contacts with different domains of the 23S rRNA in the assembled 50S subunit and ribosome. In terms of biological role, the globular domain of the protein is located near the polypeptide exit tunnel on the outside of the subunit, while an extended beta-hairpin is found that lines the wall of the exit tunnel in the center of the 70S ribosome. This Methanosarcina mazei (strain ATCC BAA-159 / DSM 3647 / Goe1 / Go1 / JCM 11833 / OCM 88) (Methanosarcina frisia) protein is Large ribosomal subunit protein uL22.